The chain runs to 301 residues: Elongation factor Ts (301 aa).

Positions 82 to 85 are involved in Mg(2+) ion dislocation from EF-Tu; sequence TDFV.

Belongs to the EF-Ts family.

It localises to the cytoplasm. Its function is as follows. Associates with the EF-Tu.GDP complex and induces the exchange of GDP to GTP. It remains bound to the aminoacyl-tRNA.EF-Tu.GTP complex up to the GTP hydrolysis stage on the ribosome. The protein is Elongation factor Ts of Hyphomonas neptunium (strain ATCC 15444).